Consider the following 491-residue polypeptide: Cyclin-B1-5 (491 aa).

Residues 275–347 (DMYSFYKEVE…VKAVPKRELQ (73 aa)) enclose the Cyclin N-terminal domain.

Belongs to the cyclin family. Cyclin AB subfamily. In terms of tissue distribution, expressed in roots, stems and flowers.

The sequence is that of Cyclin-B1-5 (CYCB1-5) from Arabidopsis thaliana (Mouse-ear cress).